A 51-amino-acid polypeptide reads, in one-letter code: Toxin CSTX-18 (51 aa).

Intrachain disulfides connect Cys9–Cys22, Cys14–Cys27, Cys21–Cys36, and Cys29–Cys34.

In terms of processing, contains 4 disulfide bonds. Expressed by the venom gland.

The protein localises to the secreted. In Cupiennius salei (American wandering spider), this protein is Toxin CSTX-18.